The following is a 1208-amino-acid chain: E3 ubiquitin-protein ligase DZIP3 (1208 aa).

Positions 10 to 29 are enriched in basic and acidic residues; that stretch reads VRHPAVEDQRKEETENKLEK. Disordered stretches follow at residues 10–38 and 637–698; these read VRHPAVEDQRKEETENKLEKSSGQLNKQE and GTSI…PHSV. 4 coiled-coil regions span residues 14-43, 647-676, 792-853, and 904-939; these read AVEDQRKEETENKLEKSSGQLNKQENDIPT, ESLKDLQEVKSKQRKKKKTKNKKNKDSKED, IASL…SKLN, and QLKAAVDSWNAIVADVRNKIAFLRTQYNEQINKVKQ. Over residues 637–647 the composition is skewed to polar residues; the sequence is GTSIPSESSTE. Basic and acidic residues predominate over residues 648–657; that stretch reads SLKDLQEVKS. Basic residues predominate over residues 658–669; sequence KQRKKKKTKNKK. The segment covering 670-693 has biased composition (basic and acidic residues); the sequence is NKDSKEDQVPYVVEKEEQLRKEQA. The disordered stretch occupies residues 1088–1145; sequence KSQSQGKSVSNVNCVSPSHSPSQPDAAQPPKPAWRPLTSQGPATWEGASNPDEEEEEE. Over residues 1089–1112 the composition is skewed to polar residues; sequence SQSQGKSVSNVNCVSPSHSPSQPD. The RING-type; atypical zinc-finger motif lies at 1148 to 1188; the sequence is CVICHENLSPENLSVLPCAHKFHAQCIRPWLMQQGTCPTCR.

As to quaternary structure, interacts with DAZ proteins. Widely expressed at low level. Highly expressed in skeletal muscle, kidney and heart. Expressed at low level in placenta, lung, brain, liver and pancreas.

The protein resides in the cytoplasm. The enzyme catalyses S-ubiquitinyl-[E2 ubiquitin-conjugating enzyme]-L-cysteine + [acceptor protein]-L-lysine = [E2 ubiquitin-conjugating enzyme]-L-cysteine + N(6)-ubiquitinyl-[acceptor protein]-L-lysine.. Its pathway is protein modification; protein ubiquitination. In terms of biological role, E3 Ubiquitin ligase proteins mediate ubiquitination and subsequent proteasomal degradation of target proteins. E3 ubiquitin ligases accept ubiquitin from an E2 ubiquitin-conjugating enzyme in the form of a thioester and then directly transfers the ubiquitin to targeted substrates. Able to specifically bind RNA. This Homo sapiens (Human) protein is E3 ubiquitin-protein ligase DZIP3 (DZIP3).